The following is a 173-amino-acid chain: Large ribosomal subunit protein uL10 (173 aa).

It belongs to the universal ribosomal protein uL10 family. In terms of assembly, part of the ribosomal stalk of the 50S ribosomal subunit. The N-terminus interacts with L11 and the large rRNA to form the base of the stalk. The C-terminus forms an elongated spine to which L12 dimers bind in a sequential fashion forming a multimeric L10(L12)X complex.

Forms part of the ribosomal stalk, playing a central role in the interaction of the ribosome with GTP-bound translation factors. In Bifidobacterium adolescentis (strain ATCC 15703 / DSM 20083 / NCTC 11814 / E194a), this protein is Large ribosomal subunit protein uL10.